A 266-amino-acid chain; its full sequence is Phosphatidylglycerol--prolipoprotein diacylglyceryl transferase (266 aa).

7 helical membrane passes run 10–30 (VAIA…LVGI), 56–76 (LVFW…VFFY), 92–112 (WEGG…TWWF), 120–140 (FFEL…AGRI), 172–192 (PSQL…LWFY), 200–220 (MAVS…VEFV), and 234–254 (WLTM…GLIA). Arg-139 lines the a 1,2-diacyl-sn-glycero-3-phospho-(1'-sn-glycerol) pocket.

It belongs to the Lgt family.

It localises to the cell inner membrane. It carries out the reaction L-cysteinyl-[prolipoprotein] + a 1,2-diacyl-sn-glycero-3-phospho-(1'-sn-glycerol) = an S-1,2-diacyl-sn-glyceryl-L-cysteinyl-[prolipoprotein] + sn-glycerol 1-phosphate + H(+). It participates in protein modification; lipoprotein biosynthesis (diacylglyceryl transfer). Functionally, catalyzes the transfer of the diacylglyceryl group from phosphatidylglycerol to the sulfhydryl group of the N-terminal cysteine of a prolipoprotein, the first step in the formation of mature lipoproteins. The polypeptide is Phosphatidylglycerol--prolipoprotein diacylglyceryl transferase (Ectopseudomonas mendocina (strain ymp) (Pseudomonas mendocina)).